The primary structure comprises 245 residues: 3-deoxy-manno-octulosonate cytidylyltransferase (245 aa).

Belongs to the KdsB family.

The protein localises to the cytoplasm. The catalysed reaction is 3-deoxy-alpha-D-manno-oct-2-ulosonate + CTP = CMP-3-deoxy-beta-D-manno-octulosonate + diphosphate. Its pathway is nucleotide-sugar biosynthesis; CMP-3-deoxy-D-manno-octulosonate biosynthesis; CMP-3-deoxy-D-manno-octulosonate from 3-deoxy-D-manno-octulosonate and CTP: step 1/1. It participates in bacterial outer membrane biogenesis; lipopolysaccharide biosynthesis. In terms of biological role, activates KDO (a required 8-carbon sugar) for incorporation into bacterial lipopolysaccharide in Gram-negative bacteria. This Rhodopseudomonas palustris (strain ATCC BAA-98 / CGA009) protein is 3-deoxy-manno-octulosonate cytidylyltransferase.